Reading from the N-terminus, the 495-residue chain is Cysteine--tRNA ligase (495 aa).

Cys-35 contributes to the Zn(2+) binding site. The 'HIGH' region motif lies at 37–47; that stretch reads PTVYSNVHLGN. 3 residues coordinate Zn(2+): Cys-230, His-255, and Glu-259. Residues 287–291 carry the 'KMSKS' region motif; that stretch reads KMSKS. Lys-290 lines the ATP pocket.

It belongs to the class-I aminoacyl-tRNA synthetase family. Monomer. Requires Zn(2+) as cofactor.

The protein localises to the cytoplasm. It carries out the reaction tRNA(Cys) + L-cysteine + ATP = L-cysteinyl-tRNA(Cys) + AMP + diphosphate. This is Cysteine--tRNA ligase from Flavobacterium psychrophilum (strain ATCC 49511 / DSM 21280 / CIP 103535 / JIP02/86).